Here is a 369-residue protein sequence, read N- to C-terminus: Protein V (369 aa).

Disordered stretches follow at residues 1–24 (MDQDALISKEDSEVEREASGGRES) and 38–320 (SEPT…GHRR). The segment covering 7 to 20 (ISKEDSEVEREASG) has biased composition (basic and acidic residues). Positions 50 to 61 (LHNTINTLQRPG) are enriched in polar residues. Basic and acidic residues-rich tracts occupy residues 99-110 (AEAHARNVDKQN) and 150-168 (GAEDENREMAANPDKRGED). S249, S257, and S260 each carry phosphoserine; by host. The Zn(2+) site is built by H318, C337, C341, C353, C355, C358, C362, and C365.

It belongs to the paramyxoviruses V protein family. As to quaternary structure, interacts with host IFIH1/MDA5 and DHX58/LGP2. Interacts with host IRF3. Interacts with host RIGI regulatory protein (via CARDs domain) and host TRIM25 (via SPRY domain); these interactions prevent TRIM25-mediated ubiquitination of RIG-I and disrupts downstream RIG-I signaling.

It is found in the host cytoplasm. Its function is as follows. Plays an essential role in the inhibition of host immune response. Prevents the establishment of cellular antiviral state by blocking interferon-alpha/beta (IFN-alpha/beta) production and signaling pathway. Interacts with host IFIH1/MDA5 and DHX58/LGP2 to inhibit the transduction pathway involved in the activation of IFN-beta promoter, thus protecting the virus against cell antiviral state. Also interacts with and inhibits host IRF3. Blocks the type I interferon signaling pathway by disrupting the RIG-I signaling pathway. In Sendai virus (strain Hamamatsu) (SeV), this protein is Protein V (P/V/C).